Here is a 223-residue protein sequence, read N- to C-terminus: Deoxyribose-phosphate aldolase (223 aa).

Residue Asp89 is the Proton donor/acceptor of the active site. Lys152 (schiff-base intermediate with acetaldehyde) is an active-site residue. Lys181 functions as the Proton donor/acceptor in the catalytic mechanism.

It belongs to the DeoC/FbaB aldolase family. DeoC type 1 subfamily.

The protein resides in the cytoplasm. The enzyme catalyses 2-deoxy-D-ribose 5-phosphate = D-glyceraldehyde 3-phosphate + acetaldehyde. The protein operates within carbohydrate degradation; 2-deoxy-D-ribose 1-phosphate degradation; D-glyceraldehyde 3-phosphate and acetaldehyde from 2-deoxy-alpha-D-ribose 1-phosphate: step 2/2. Catalyzes a reversible aldol reaction between acetaldehyde and D-glyceraldehyde 3-phosphate to generate 2-deoxy-D-ribose 5-phosphate. The chain is Deoxyribose-phosphate aldolase from Bacillus cereus (strain G9842).